The primary structure comprises 30 residues: Acidic phospholipase A2 homolog cannitoxin gamma chain (30 aa).

Heterotrimer of alpha, beta, and gamma chains; non-covalently linked. Glycosylated. In terms of tissue distribution, expressed by the venom gland.

It is found in the secreted. Its function is as follows. Heterotrimer: Snake venom phospholipase A2 (PLA2) heterotrimer that acts as a potent presynaptic neurotoxin by blocking synaptic transmission and synaptic vesicle recycling. Enzymatic activity is essential for the neurotoxic effects. May act by binding in a calcium-dependent fashion to neurotonal pentraxin-1 (NPTX1) and neurotonal pentraxin-2 (NPTX2), but not to neuronal pentraxin receptor (NPTXR). Also binds to taipoxin-associated calcium binding protein 49 (RCN2), a protein localized in the lumen of endoplasmic reticulum. Monomer (gamma chain): Snake venom phospholipase A2 homolog that is neither toxic nor enzymatically active. Does not bind calcium. This is Acidic phospholipase A2 homolog cannitoxin gamma chain from Oxyuranus scutellatus canni (Papuan taipan).